The following is a 154-amino-acid chain: Ribosome maturation factor RimP (154 aa).

It belongs to the RimP family.

It is found in the cytoplasm. Its function is as follows. Required for maturation of 30S ribosomal subunits. This is Ribosome maturation factor RimP from Clostridium novyi (strain NT).